A 216-amino-acid polypeptide reads, in one-letter code: Pyridoxine/pyridoxamine 5'-phosphate oxidase (216 aa).

Substrate contacts are provided by residues 12–15 (RKSY) and Lys70. Residues 65-70 (RVVLVK), 80-81 (FT), Arg86, and Lys87 each bind FMN. Substrate-binding residues include Tyr127, Arg131, and Ser135. Residues 144-145 (QS) and Trp188 each bind FMN. Residue 194–196 (RLH) participates in substrate binding. Residue Arg198 coordinates FMN.

The protein belongs to the pyridoxamine 5'-phosphate oxidase family. Homodimer. FMN is required as a cofactor.

It carries out the reaction pyridoxamine 5'-phosphate + O2 + H2O = pyridoxal 5'-phosphate + H2O2 + NH4(+). The enzyme catalyses pyridoxine 5'-phosphate + O2 = pyridoxal 5'-phosphate + H2O2. The protein operates within cofactor metabolism; pyridoxal 5'-phosphate salvage; pyridoxal 5'-phosphate from pyridoxamine 5'-phosphate: step 1/1. Its pathway is cofactor metabolism; pyridoxal 5'-phosphate salvage; pyridoxal 5'-phosphate from pyridoxine 5'-phosphate: step 1/1. In terms of biological role, catalyzes the oxidation of either pyridoxine 5'-phosphate (PNP) or pyridoxamine 5'-phosphate (PMP) into pyridoxal 5'-phosphate (PLP). The sequence is that of Pyridoxine/pyridoxamine 5'-phosphate oxidase from Polaromonas sp. (strain JS666 / ATCC BAA-500).